Reading from the N-terminus, the 77-residue chain is Translation initiation factor IF-1, chloroplastic (77 aa).

An S1-like domain is found at 1–71; that stretch reads MKEQKWIHEG…TRGRIIYRLR (71 aa).

Belongs to the IF-1 family. As to quaternary structure, component of the 30S ribosomal translation pre-initiation complex which assembles on the 30S ribosome in the order IF-2 and IF-3, IF-1 and N-formylmethionyl-tRNA(fMet); mRNA recruitment can occur at any time during PIC assembly.

Its subcellular location is the plastid. It is found in the chloroplast. In terms of biological role, one of the essential components for the initiation of protein synthesis. Stabilizes the binding of IF-2 and IF-3 on the 30S subunit to which N-formylmethionyl-tRNA(fMet) subsequently binds. Helps modulate mRNA selection, yielding the 30S pre-initiation complex (PIC). Upon addition of the 50S ribosomal subunit IF-1, IF-2 and IF-3 are released leaving the mature 70S translation initiation complex. In Spinacia oleracea (Spinach), this protein is Translation initiation factor IF-1, chloroplastic.